We begin with the raw amino-acid sequence, 549 residues long: Hydroxylamine reductase (549 aa).

The [4Fe-4S] cluster site is built by Cys3, Cys6, Cys15, and Cys21. His244, Glu268, Cys313, Cys405, Cys433, Cys458, Glu492, and Lys494 together coordinate hybrid [4Fe-2O-2S] cluster. The residue at position 405 (Cys405) is a Cysteine persulfide.

This sequence belongs to the HCP family. It depends on [4Fe-4S] cluster as a cofactor. Hybrid [4Fe-2O-2S] cluster is required as a cofactor.

The protein resides in the cytoplasm. It carries out the reaction A + NH4(+) + H2O = hydroxylamine + AH2 + H(+). Functionally, catalyzes the reduction of hydroxylamine to form NH(3) and H(2)O. This chain is Hydroxylamine reductase, found in Crocosphaera subtropica (strain ATCC 51142 / BH68) (Cyanothece sp. (strain ATCC 51142)).